The chain runs to 457 residues: Chromosomal replication initiator protein DnaA (457 aa).

The interval 1–75 (MDAQLNNLWE…ALKIVTSRKF (75 aa)) is domain I, interacts with DnaA modulators. Residues 75–118 (FKIEFYLESDLEEEKENEEKQKEEKKENTNDVDGSIVVSDEMSA) form a domain II region. A domain III, AAA+ region region spans residues 119 to 335 (TLNPKYTFQS…GALIRIIAYS (217 aa)). Residues glycine 163, glycine 165, lysine 166, and threonine 167 each contribute to the ATP site. The segment at 336-457 (SLTNRDVSVD…NDITKKLTQK (122 aa)) is domain IV, binds dsDNA.

The protein belongs to the DnaA family. As to quaternary structure, oligomerizes as a right-handed, spiral filament on DNA at oriC.

Its subcellular location is the cytoplasm. Its function is as follows. Plays an essential role in the initiation and regulation of chromosomal replication. ATP-DnaA binds to the origin of replication (oriC) to initiate formation of the DNA replication initiation complex once per cell cycle. Binds the DnaA box (a 9 base pair repeat at the origin) and separates the double-stranded (ds)DNA. Forms a right-handed helical filament on oriC DNA; dsDNA binds to the exterior of the filament while single-stranded (ss)DNA is stabiized in the filament's interior. The ATP-DnaA-oriC complex binds and stabilizes one strand of the AT-rich DNA unwinding element (DUE), permitting loading of DNA polymerase. After initiation quickly degrades to an ADP-DnaA complex that is not apt for DNA replication. Binds acidic phospholipids. This Clostridium perfringens (strain ATCC 13124 / DSM 756 / JCM 1290 / NCIMB 6125 / NCTC 8237 / Type A) protein is Chromosomal replication initiator protein DnaA.